We begin with the raw amino-acid sequence, 370 residues long: tRNA 2-selenouridine synthase (370 aa).

Residues 12 to 136 (FLDDVPMMDM…MRTFLLETTQ (125 aa)) form the Rhodanese domain. Cys95 acts as the S-selanylcysteine intermediate in catalysis.

This sequence belongs to the SelU family. As to quaternary structure, monomer.

The enzyme catalyses 5-methylaminomethyl-2-thiouridine(34) in tRNA + selenophosphate + (2E)-geranyl diphosphate + H2O + H(+) = 5-methylaminomethyl-2-selenouridine(34) in tRNA + (2E)-thiogeraniol + phosphate + diphosphate. The catalysed reaction is 5-methylaminomethyl-2-thiouridine(34) in tRNA + (2E)-geranyl diphosphate = 5-methylaminomethyl-S-(2E)-geranyl-thiouridine(34) in tRNA + diphosphate. It catalyses the reaction 5-methylaminomethyl-S-(2E)-geranyl-thiouridine(34) in tRNA + selenophosphate + H(+) = 5-methylaminomethyl-2-(Se-phospho)selenouridine(34) in tRNA + (2E)-thiogeraniol. It carries out the reaction 5-methylaminomethyl-2-(Se-phospho)selenouridine(34) in tRNA + H2O = 5-methylaminomethyl-2-selenouridine(34) in tRNA + phosphate. Involved in the post-transcriptional modification of the uridine at the wobble position (U34) of tRNA(Lys), tRNA(Glu) and tRNA(Gln). Catalyzes the conversion of 2-thiouridine (S2U-RNA) to 2-selenouridine (Se2U-RNA). Acts in a two-step process involving geranylation of 2-thiouridine (S2U) to S-geranyl-2-thiouridine (geS2U) and subsequent selenation of the latter derivative to 2-selenouridine (Se2U) in the tRNA chain. In Pseudomonas putida (strain ATCC 47054 / DSM 6125 / CFBP 8728 / NCIMB 11950 / KT2440), this protein is tRNA 2-selenouridine synthase.